A 325-amino-acid chain; its full sequence is ATP phosphoribosyltransferase (325 aa).

The protein belongs to the ATP phosphoribosyltransferase family. Long subfamily. Requires Mg(2+) as cofactor.

The protein localises to the cytoplasm. It carries out the reaction 1-(5-phospho-beta-D-ribosyl)-ATP + diphosphate = 5-phospho-alpha-D-ribose 1-diphosphate + ATP. Its pathway is amino-acid biosynthesis; L-histidine biosynthesis; L-histidine from 5-phospho-alpha-D-ribose 1-diphosphate: step 1/9. Feedback inhibited by histidine. Functionally, catalyzes the condensation of ATP and 5-phosphoribose 1-diphosphate to form N'-(5'-phosphoribosyl)-ATP (PR-ATP). Has a crucial role in the pathway because the rate of histidine biosynthesis seems to be controlled primarily by regulation of HisG enzymatic activity. The protein is ATP phosphoribosyltransferase of Nitrobacter hamburgensis (strain DSM 10229 / NCIMB 13809 / X14).